The sequence spans 165 residues: MSRIALYPGSFDPVTNGHLDVVRHAVALCDRLVVAIGIHPGKKPLFTTEERLMMVKSVFEPVANAAGCTFDCTTYDNLTVTSAQQVGATLMIRGLRDGTDLDYEMQIAGMNETMAPGIHTVFVPASVGVRPITATLVRQIAAMGGDVSAFVPPDVAASLKSKFAG.

Ser-10 provides a ligand contact to substrate. ATP contacts are provided by residues 10–11 (SF) and His-18. Positions 42, 79, and 93 each coordinate substrate. ATP-binding positions include 94 to 96 (GLR), Glu-104, and 129 to 135 (VRPITAT).

Belongs to the bacterial CoaD family. Homohexamer. The cofactor is Mg(2+).

Its subcellular location is the cytoplasm. It catalyses the reaction (R)-4'-phosphopantetheine + ATP + H(+) = 3'-dephospho-CoA + diphosphate. The protein operates within cofactor biosynthesis; coenzyme A biosynthesis; CoA from (R)-pantothenate: step 4/5. Its function is as follows. Reversibly transfers an adenylyl group from ATP to 4'-phosphopantetheine, yielding dephospho-CoA (dPCoA) and pyrophosphate. This is Phosphopantetheine adenylyltransferase from Rhodopseudomonas palustris (strain BisB5).